The sequence spans 585 residues: Bifunctional lycopene cyclase/phytoene synthase (585 aa).

A lycopene beta-cyclase region spans residues 1 to 243; it reads MGFDYAIVHV…IVFGQLAFDN (243 aa). Transmembrane regions (helical) follow at residues 3 to 23, 35 to 55, 75 to 97, 123 to 141, 151 to 171, 173 to 193, and 221 to 241; these read FDYA…LTLL, KVLF…SYLI, IPLE…YLIL, LAGQ…LRVH, LIVV…YQFI, GLPW…LWLV, and IEEA…QLAF. Positions 250–585 are phytoene synthase; the sequence is TFPALFPKPP…AWRTLNKSIA (336 aa).

It in the N-terminal section; belongs to the lycopene beta-cyclase family. This sequence in the C-terminal section; belongs to the phytoene/squalene synthase family.

Its subcellular location is the membrane. It carries out the reaction all-trans-lycopene = gamma-carotene. It catalyses the reaction gamma-carotene = all-trans-beta-carotene. The catalysed reaction is 2 (2E,6E,10E)-geranylgeranyl diphosphate = 15-cis-phytoene + 2 diphosphate. It functions in the pathway carotenoid biosynthesis; beta-carotene biosynthesis. It participates in carotenoid biosynthesis; phytoene biosynthesis; all-trans-phytoene from geranylgeranyl diphosphate: step 1/1. Bifunctional enzyme that catalyzes the reactions from geranylgeranyl diphosphate to phytoene (phytoene synthase) and lycopene to beta-carotene via the intermediate gamma-carotene (lycopene cyclase). This chain is Bifunctional lycopene cyclase/phytoene synthase, found in Phaeosphaeria nodorum (strain SN15 / ATCC MYA-4574 / FGSC 10173) (Glume blotch fungus).